A 277-amino-acid polypeptide reads, in one-letter code: 3-methyl-2-oxobutanoate hydroxymethyltransferase (277 aa).

The Mg(2+) site is built by aspartate 43 and aspartate 82. Residues 43–44 (DS), aspartate 82, and lysine 112 contribute to the 3-methyl-2-oxobutanoate site. Glutamate 114 lines the Mg(2+) pocket. Glutamate 181 (proton acceptor) is an active-site residue.

The protein belongs to the PanB family. In terms of assembly, homodecamer; pentamer of dimers. The cofactor is Mg(2+).

Its subcellular location is the cytoplasm. It catalyses the reaction 3-methyl-2-oxobutanoate + (6R)-5,10-methylene-5,6,7,8-tetrahydrofolate + H2O = 2-dehydropantoate + (6S)-5,6,7,8-tetrahydrofolate. It functions in the pathway cofactor biosynthesis; (R)-pantothenate biosynthesis; (R)-pantoate from 3-methyl-2-oxobutanoate: step 1/2. Its function is as follows. Catalyzes the reversible reaction in which hydroxymethyl group from 5,10-methylenetetrahydrofolate is transferred onto alpha-ketoisovalerate to form ketopantoate. The polypeptide is 3-methyl-2-oxobutanoate hydroxymethyltransferase (Listeria monocytogenes serotype 4a (strain HCC23)).